A 207-amino-acid chain; its full sequence is Octanoyltransferase (207 aa).

Residues 29–204 (AETRDELWVV…HLERHLSTSK (176 aa)) form the BPL/LPL catalytic domain. Substrate-binding positions include 68–75 (RGGQITYH), 135–137 (SLG), and 148–150 (GLS). The active-site Acyl-thioester intermediate is the Cys166.

Belongs to the LipB family.

It is found in the cytoplasm. It carries out the reaction octanoyl-[ACP] + L-lysyl-[protein] = N(6)-octanoyl-L-lysyl-[protein] + holo-[ACP] + H(+). The protein operates within protein modification; protein lipoylation via endogenous pathway; protein N(6)-(lipoyl)lysine from octanoyl-[acyl-carrier-protein]: step 1/2. Catalyzes the transfer of endogenously produced octanoic acid from octanoyl-acyl-carrier-protein onto the lipoyl domains of lipoate-dependent enzymes. Lipoyl-ACP can also act as a substrate although octanoyl-ACP is likely to be the physiological substrate. In Chromobacterium violaceum (strain ATCC 12472 / DSM 30191 / JCM 1249 / CCUG 213 / NBRC 12614 / NCIMB 9131 / NCTC 9757 / MK), this protein is Octanoyltransferase.